The chain runs to 475 residues: MSAFQNGGIASRALDDDSDIEEEALANDYKEQVQYEGMEELEQVNSMSMAQQTDDIQSRLAAAAQPLDFSAPLEVKFASYDNYCSLFHFILNSDGPVDLEPPSYYWAWDVIDEFIYQFNSFCSYRNRVARQGTNEEEIQILREAPNTWGCYSVLNVLYSLIQRSQINEQLAAMRRNEEPMAVAGDYGSKSLYRMLGYFSIIGLLRVHCLLGDFSLALKTLDDIELNKKAMFARVMAAHFTTYYYVGFSYMMMRRYADAIRMFSHILIYVSRTKNFQKNAQYDSISKKNDQMYALIAICVAFHPTRLDDTIHTALREKYGDQLLKLQRGGPESLPIFEELFRSACPKFISPTPPDFDNPELNVDPLEHHLSIFMDEVKTNMWSPTVKSYLRLYTTMDLKKLAGFLEVEPEKLRGWLLVNKQRSRQIRWTDNGLLDGEVVNSNDLDYAMQGDLIHISEAKVGRKLVDWYLRNLARTY.

Residues 257–451 enclose the PCI domain; the sequence is DAIRMFSHIL…DLDYAMQGDL (195 aa).

The protein belongs to the eIF-3 subunit L family. Component of the eukaryotic translation initiation factor 3 (eIF-3) complex.

It localises to the cytoplasm. In terms of biological role, component of the eukaryotic translation initiation factor 3 (eIF-3) complex, which is involved in protein synthesis of a specialized repertoire of mRNAs and, together with other initiation factors, stimulates binding of mRNA and methionyl-tRNAi to the 40S ribosome. The eIF-3 complex specifically targets and initiates translation of a subset of mRNAs involved in cell proliferation. The sequence is that of Eukaryotic translation initiation factor 3 subunit L from Sclerotinia sclerotiorum (strain ATCC 18683 / 1980 / Ss-1) (White mold).